The primary structure comprises 341 residues: S-adenosylmethionine:tRNA ribosyltransferase-isomerase (341 aa).

Belongs to the QueA family. Monomer.

It is found in the cytoplasm. It catalyses the reaction 7-aminomethyl-7-carbaguanosine(34) in tRNA + S-adenosyl-L-methionine = epoxyqueuosine(34) in tRNA + adenine + L-methionine + 2 H(+). It functions in the pathway tRNA modification; tRNA-queuosine biosynthesis. Its function is as follows. Transfers and isomerizes the ribose moiety from AdoMet to the 7-aminomethyl group of 7-deazaguanine (preQ1-tRNA) to give epoxyqueuosine (oQ-tRNA). The polypeptide is S-adenosylmethionine:tRNA ribosyltransferase-isomerase (Clostridium botulinum (strain Okra / Type B1)).